We begin with the raw amino-acid sequence, 230 residues long: UPF0173 metal-dependent hydrolase Acid_3917 (230 aa).

The protein belongs to the UPF0173 family.

The protein is UPF0173 metal-dependent hydrolase Acid_3917 of Solibacter usitatus (strain Ellin6076).